Reading from the N-terminus, the 358-residue chain is Probable branched-chain-amino-acid aminotransferase (358 aa).

Lysine 196 bears the N6-(pyridoxal phosphate)lysine mark.

This sequence belongs to the class-IV pyridoxal-phosphate-dependent aminotransferase family. Pyridoxal 5'-phosphate serves as cofactor.

The catalysed reaction is L-leucine + 2-oxoglutarate = 4-methyl-2-oxopentanoate + L-glutamate. It carries out the reaction L-isoleucine + 2-oxoglutarate = (S)-3-methyl-2-oxopentanoate + L-glutamate. The enzyme catalyses L-valine + 2-oxoglutarate = 3-methyl-2-oxobutanoate + L-glutamate. It participates in amino-acid biosynthesis; L-isoleucine biosynthesis; L-isoleucine from 2-oxobutanoate: step 4/4. The protein operates within amino-acid biosynthesis; L-leucine biosynthesis; L-leucine from 3-methyl-2-oxobutanoate: step 4/4. It functions in the pathway amino-acid biosynthesis; L-valine biosynthesis; L-valine from pyruvate: step 4/4. Its function is as follows. Acts on leucine, isoleucine and valine. This Staphylococcus aureus (strain N315) protein is Probable branched-chain-amino-acid aminotransferase (ilvE).